Consider the following 522-residue polypeptide: MAGGSLAPAGVAKERAEQYQGKVTFAVFVACMVAAVGGSIFGYDIGISGGVISMDAFLEKFFRSVYLKKKHAHENNYCKYDDQRLAAFTSSLYLAGLAASLVAGPITRIYGRRASIISGGISFLIGAALNATAINLAMLLLGRIMLGVGIGFGNQAVPLYLSEMAPTHLRGGLNIMFQLATTSGIFTANMVNYGTHKLESWGWRLSLGLAAAPALLMTIGGLLLPETPNSLIEQGLHEKGRNVLEKIRGTKHVDAEFQDMLDASELANSIKHPFRNILEKRNRPQLVMAIFMPTFQILTGINIILFYAPPLFQSMGFGGNAALYSSAVTGAVLCSSTFISIATVDRLGRRFLLISGGIQMITCQVIVAIILGVKFGDNQQLSKSFSVLVVIMICLFVLAFGWSWGPLGWTVPSEIFPLETRSAGQSITVAVNLFFTFVIAQSFPSLLCAFKFGIFLFFAGWVTVMTAFVYIFLPETKGVPIEEMIFLWRKHWFWKKIVPGQPEVDDSRESMEMGEAVASRIK.

The Cytoplasmic segment spans residues 1-22; sequence MAGGSLAPAGVAKERAEQYQGK. 12 helical membrane passes run 23–43, 87–107, 121–141, 144–164, 173–193, 205–225, 286–306, 322–342, 351–371, 384–404, 430–450, and 453–473; these read VTFAVFVACMVAAVGGSIFGY, AFTSSLYLAGLAASLVAGPIT, ISFLIGAALNATAINLAMLLL, IMLGVGIGFGNQAVPLYLSEM, LNIMFQLATTSGIFTANMVNY, LSLGLAAAPALLMTIGGLLLP, LVMAIFMPTFQILTGINIILF, ALYSSAVTGAVLCSSTFISIA, FLLISGGIQMITCQVIVAIIL, SFSVLVVIMICLFVLAFGWSW, AVNLFFTFVIAQSFPSLLCAF, and GIFLFFAGWVTVMTAFVYIFL. The Cytoplasmic segment spans residues 474–522; sequence PETKGVPIEEMIFLWRKHWFWKKIVPGQPEVDDSRESMEMGEAVASRIK.

It belongs to the major facilitator superfamily. Sugar transporter (TC 2.A.1.1) family.

The protein localises to the membrane. This is Sugar carrier protein A (STA) from Ricinus communis (Castor bean).